Consider the following 443-residue polypeptide: Signal recognition particle 54 kDa protein (443 aa).

GTP is bound by residues 107-114 (GVQGSGKT), 189-193 (DTAGR), and 247-250 (TKLD).

The protein belongs to the GTP-binding SRP family. SRP54 subfamily. Part of the signal recognition particle protein translocation system, which is composed of SRP and FtsY. Archaeal SRP consists of a 7S RNA molecule of 300 nucleotides and two protein subunits: SRP54 and SRP19.

Its subcellular location is the cytoplasm. It carries out the reaction GTP + H2O = GDP + phosphate + H(+). Functionally, involved in targeting and insertion of nascent membrane proteins into the cytoplasmic membrane. Binds to the hydrophobic signal sequence of the ribosome-nascent chain (RNC) as it emerges from the ribosomes. The SRP-RNC complex is then targeted to the cytoplasmic membrane where it interacts with the SRP receptor FtsY. The polypeptide is Signal recognition particle 54 kDa protein (Pyrococcus abyssi (strain GE5 / Orsay)).